Consider the following 296-residue polypeptide: N-acetylmuramic acid 6-phosphate etherase 2 (296 aa).

An SIS domain is found at 55–218 (IVANFKAGGR…STASMVGIGK (164 aa)). The active-site Proton donor is Glu83. Glu114 is a catalytic residue.

The protein belongs to the GCKR-like family. MurNAc-6-P etherase subfamily. In terms of assembly, homodimer.

It carries out the reaction N-acetyl-D-muramate 6-phosphate + H2O = N-acetyl-D-glucosamine 6-phosphate + (R)-lactate. Its pathway is amino-sugar metabolism; N-acetylmuramate degradation. In terms of biological role, specifically catalyzes the cleavage of the D-lactyl ether substituent of MurNAc 6-phosphate, producing GlcNAc 6-phosphate and D-lactate. The chain is N-acetylmuramic acid 6-phosphate etherase 2 from Lactiplantibacillus plantarum (strain ATCC BAA-793 / NCIMB 8826 / WCFS1) (Lactobacillus plantarum).